The primary structure comprises 135 residues: Ribonuclease P protein component 2 (135 aa).

It belongs to the eukaryotic/archaeal RNase P protein component 2 family. In terms of assembly, consists of a catalytic RNA component and at least 4-5 protein subunits.

It is found in the cytoplasm. It carries out the reaction Endonucleolytic cleavage of RNA, removing 5'-extranucleotides from tRNA precursor.. Part of ribonuclease P, a protein complex that generates mature tRNA molecules by cleaving their 5'-ends. This is Ribonuclease P protein component 2 from Methanococcus aeolicus (strain ATCC BAA-1280 / DSM 17508 / OCM 812 / Nankai-3).